A 145-amino-acid chain; its full sequence is Ornithine decarboxylase antizyme (145 aa).

It belongs to the ODC antizyme family. Interacts with ODC1 and thereby sterically blocks ODC homodimerization.

Functionally, ornithine decarboxylase (ODC) antizyme protein that negatively regulates ODC activity and intracellular polyamine biosynthesis and uptake in response to increased intracellular polyamine levels. Binds to ODC monomers, inhibiting the assembly of the functional ODC homodimer, and targets the monomers for ubiquitin-independent proteolytic destruction by the 26S proteasome. This chain is Ornithine decarboxylase antizyme, found in Onchocerca volvulus.